The primary structure comprises 382 residues: ORC1-type DNA replication protein 1 (382 aa).

Residues 63–67, Tyr205, and Arg217 contribute to the ATP site; that span reads TGKTA.

This sequence belongs to the CDC6/cdc18 family. In terms of assembly, monomer. Interacts with MCM via the WH domain. In terms of processing, autophosphorylated on a serine. Phosphorylation is stimulated by binding to MCM. Both single-stranded DNA and double-stranded DNA inhibit the phosphorylation reaction.

In terms of biological role, involved in regulation of DNA replication. May play an essential role in origin recognition. Binds to DNA, with a preference for origin-specific double-stranded sequences. Does not bind single-stranded DNA. Inhibits MCM helicase activity but does not affect its oligomeric state. This is ORC1-type DNA replication protein 1 (cdc6-1) from Methanothermobacter thermautotrophicus (strain ATCC 29096 / DSM 1053 / JCM 10044 / NBRC 100330 / Delta H) (Methanobacterium thermoautotrophicum).